Here is a 450-residue protein sequence, read N- to C-terminus: Deoxyguanosinetriphosphate triphosphohydrolase-like protein (450 aa).

The 214-residue stretch at 61–274 folds into the HD domain; sequence RLTHSLEVAQ…MELADDIAYA (214 aa).

The protein belongs to the dGTPase family. Type 2 subfamily.

The chain is Deoxyguanosinetriphosphate triphosphohydrolase-like protein from Histophilus somni (strain 2336) (Haemophilus somnus).